Here is a 69-residue protein sequence, read N- to C-terminus: UPF0434 protein Rmet_0534 (69 aa).

Belongs to the UPF0434 family.

The sequence is that of UPF0434 protein Rmet_0534 from Cupriavidus metallidurans (strain ATCC 43123 / DSM 2839 / NBRC 102507 / CH34) (Ralstonia metallidurans).